The sequence spans 362 residues: 2-oxoglutarate-dependent dioxygenase lolO1 (362 aa).

One can recognise a Fe2OG dioxygenase domain in the interval 199–312 (TWNYFLGQPV…RYSLVFFGHL (114 aa)). Fe cation-binding residues include His-222, Asp-224, and His-280. Arg-303 is a 2-oxoglutarate binding site.

The protein belongs to the iron/ascorbate-dependent oxidoreductase family. Fe(2+) serves as cofactor.

It participates in alkaloid biosynthesis. Functionally, 2-oxoglutarate-dependent dioxygenase; part of the gene cluster that mediates the biosynthesis of loline alkaloids, potent insecticidal agents composed of a pyrrolizidine ring system and an uncommon ether bridge linking carbons 2 and 7. Lolines are structurally differentiated by the various modifications of the L-amino group and include norloline, loline, N-methylloline, N-acetylloline, N-acetylnorloline, and N-formylloline. The first committed step is the condensation of O-acetyl-L-homoserine (derived from L-aspartic acid) and L-proline, probably catalyzed by the gamma-type pyridoxal 5'-phosphate(PLP)-dependent enzyme lolC, to give the diamino diacid, NACPP. Ensuing cyclization, decarboxylation, and acetylation steps yield 1-exo-acetamidopyrrolizidine (AcAP). LolO is required for installation of the ether bridge upon the pathway intermediate, 1-exo-acetamidopyrrolizidine (AcAP). In sequential 2-oxoglutarate- and O(2)-consuming steps, lolO removes hydrogens from C2 and C7 of AcAP to form both carbon-oxygen bonds in N-acetylnorloline (NANL), the precursor to all other lolines. The enzymes lolD, lolE, lolF and lolT have also been proposed to be involved in the ether-bridge installation. Further processing of the exocyclic moiety of NANL by fungal N-acetamidase (LolN), methyltransferase (LolM), and cytochrome P450 (LolP) enzymes, with occasional involvement of a plant acetyltransferase, generates the other known lolines. LolN transforms NANL to norlonine which is monomethylated and dimethylated to respectively lonine and N-methyllonine (NML) by lolM. LolP catalyzes hydroxylation of the methyl group in N-methylloline (NML) and further oxygenation to N-formylloline (NFL). A plant acetyltransferase is responsible for the acetylation of loline to form N-acetylloline (NAL). LolA might interact with aspartate kinase to prevent feedback inhibition of its activity by these end products and thereby promote production of l-homoserine from l-aspartate. This chain is 2-oxoglutarate-dependent dioxygenase lolO1, found in Epichloe uncinata (Endophyte fungus).